The sequence spans 1103 residues: Trophozoite exported protein 1 (1103 aa).

Residues 173 to 212 (KKEKIEDKKYEQDDEEENEEEEEEEEEEEGEEENKEDEEF) adopt a coiled-coil conformation. Disordered regions lie at residues 178–210 (EDKKYEQDDEEENEEEEEEEEEEEGEEENKEDE) and 271–301 (KSYSGDEKINTSDNAKSCSGDEKVITSDNGK). Positions 184 to 210 (QDDEEENEEEEEEEEEEEGEEENKEDE) are enriched in acidic residues. A compositionally biased stretch (basic and acidic residues) spans 271 to 280 (KSYSGDEKIN). Coiled coils occupy residues 304 to 330 (DYVKNESEEQEEKENMLNNKKRSLECN) and 478 to 518 (YKNY…KLNN). The disordered stretch occupies residues 544-601 (YFDEGENPYNRNNKNYRTDNKNSDDNNNNNNYYYNNYNSDDNYNSEDNEYNNGNYRFR). Over residues 568 to 585 (DNNNNNNYYYNNYNSDDN) the composition is skewed to low complexity. Coiled coils occupy residues 650 to 791 (FRNL…LSGI), 819 to 932 (DEKY…IYKK), and 993 to 1030 (NKKLIGHCQDLEKENSTLQNKLSNEIKNSKMLSKNLSK). The RING-type zinc finger occupies 1050 to 1089 (CSVCMENFRNYIIIKCGHIYCNNCIFNNLKTRNRKCPQCK).

The protein localises to the host cell membrane. This is Trophozoite exported protein 1 from Plasmodium falciparum (isolate 3D7).